Here is a 134-residue protein sequence, read N- to C-terminus: Sec-independent protein translocase protein TatB (134 aa).

A helical membrane pass occupies residues 2-22 (FDGIGFMELLLIGILGLVVLG). Residues 90-134 (AESVNRPYKVEDTSPVAPKASPDESPSVVEAKSSEATSENSSTPK) form a disordered region. Over residues 123 to 134 (SEATSENSSTPK) the composition is skewed to polar residues.

It belongs to the TatB family. The Tat system comprises two distinct complexes: a TatABC complex, containing multiple copies of TatA, TatB and TatC subunits, and a separate TatA complex, containing only TatA subunits. Substrates initially bind to the TatABC complex, which probably triggers association of the separate TatA complex to form the active translocon.

Its subcellular location is the cell inner membrane. In terms of biological role, part of the twin-arginine translocation (Tat) system that transports large folded proteins containing a characteristic twin-arginine motif in their signal peptide across membranes. Together with TatC, TatB is part of a receptor directly interacting with Tat signal peptides. TatB may form an oligomeric binding site that transiently accommodates folded Tat precursor proteins before their translocation. This chain is Sec-independent protein translocase protein TatB, found in Shewanella frigidimarina (strain NCIMB 400).